Here is a 299-residue protein sequence, read N- to C-terminus: Oxygen-dependent coproporphyrinogen-III oxidase (299 aa).

Position 92 (serine 92) interacts with substrate. Histidine 96 and histidine 106 together coordinate a divalent metal cation. Residue histidine 106 is the Proton donor of the active site. Position 108–110 (108–110 (NVR)) interacts with substrate. A divalent metal cation contacts are provided by histidine 145 and histidine 175. Positions 240 to 275 (YVEFNLVWDRGTLFGLQTGGRTESILMSMPPLVRWE) are important for dimerization. 258 to 260 (GGR) contributes to the substrate binding site.

This sequence belongs to the aerobic coproporphyrinogen-III oxidase family. In terms of assembly, homodimer. It depends on a divalent metal cation as a cofactor.

It localises to the cytoplasm. It catalyses the reaction coproporphyrinogen III + O2 + 2 H(+) = protoporphyrinogen IX + 2 CO2 + 2 H2O. The protein operates within porphyrin-containing compound metabolism; protoporphyrin-IX biosynthesis; protoporphyrinogen-IX from coproporphyrinogen-III (O2 route): step 1/1. In terms of biological role, involved in the heme biosynthesis. Catalyzes the aerobic oxidative decarboxylation of propionate groups of rings A and B of coproporphyrinogen-III to yield the vinyl groups in protoporphyrinogen-IX. This Salmonella newport (strain SL254) protein is Oxygen-dependent coproporphyrinogen-III oxidase.